The primary structure comprises 310 residues: Lipoyl synthase (310 aa).

[4Fe-4S] cluster-binding residues include Cys51, Cys56, Cys62, Cys77, Cys81, Cys84, and Ser290. In terms of domain architecture, Radical SAM core spans 63 to 280 (WSRKTATYLA…RRVGESLGLF (218 aa)).

The protein belongs to the radical SAM superfamily. Lipoyl synthase family. It depends on [4Fe-4S] cluster as a cofactor.

It localises to the cytoplasm. It carries out the reaction [[Fe-S] cluster scaffold protein carrying a second [4Fe-4S](2+) cluster] + N(6)-octanoyl-L-lysyl-[protein] + 2 oxidized [2Fe-2S]-[ferredoxin] + 2 S-adenosyl-L-methionine + 4 H(+) = [[Fe-S] cluster scaffold protein] + N(6)-[(R)-dihydrolipoyl]-L-lysyl-[protein] + 4 Fe(3+) + 2 hydrogen sulfide + 2 5'-deoxyadenosine + 2 L-methionine + 2 reduced [2Fe-2S]-[ferredoxin]. Its pathway is protein modification; protein lipoylation via endogenous pathway; protein N(6)-(lipoyl)lysine from octanoyl-[acyl-carrier-protein]: step 2/2. In terms of biological role, catalyzes the radical-mediated insertion of two sulfur atoms into the C-6 and C-8 positions of the octanoyl moiety bound to the lipoyl domains of lipoate-dependent enzymes, thereby converting the octanoylated domains into lipoylated derivatives. The chain is Lipoyl synthase from Chlamydia abortus (strain DSM 27085 / S26/3) (Chlamydophila abortus).